Here is a 407-residue protein sequence, read N- to C-terminus: Imidazolonepropionase (407 aa).

Fe(3+) is bound by residues histidine 74 and histidine 76. Zn(2+)-binding residues include histidine 74 and histidine 76. Positions 83, 146, and 179 each coordinate 4-imidazolone-5-propanoate. Position 146 (tyrosine 146) interacts with N-formimidoyl-L-glutamate. Position 244 (histidine 244) interacts with Fe(3+). Histidine 244 is a binding site for Zn(2+). Glutamine 247 is a 4-imidazolone-5-propanoate binding site. Residue aspartate 319 participates in Fe(3+) binding. Position 319 (aspartate 319) interacts with Zn(2+). Residues asparagine 321 and glycine 323 each contribute to the N-formimidoyl-L-glutamate site. 4-imidazolone-5-propanoate is bound at residue threonine 324.

The protein belongs to the metallo-dependent hydrolases superfamily. HutI family. It depends on Zn(2+) as a cofactor. Fe(3+) is required as a cofactor.

It localises to the cytoplasm. The catalysed reaction is 4-imidazolone-5-propanoate + H2O = N-formimidoyl-L-glutamate. Its pathway is amino-acid degradation; L-histidine degradation into L-glutamate; N-formimidoyl-L-glutamate from L-histidine: step 3/3. Catalyzes the hydrolytic cleavage of the carbon-nitrogen bond in imidazolone-5-propanoate to yield N-formimidoyl-L-glutamate. It is the third step in the universal histidine degradation pathway. This is Imidazolonepropionase from Salmonella paratyphi A (strain ATCC 9150 / SARB42).